The primary structure comprises 1357 residues: DNA-directed RNA polymerase subunit beta (1357 aa).

Belongs to the RNA polymerase beta chain family. The RNAP catalytic core consists of 2 alpha, 1 beta, 1 beta' and 1 omega subunit. When a sigma factor is associated with the core the holoenzyme is formed, which can initiate transcription.

It carries out the reaction RNA(n) + a ribonucleoside 5'-triphosphate = RNA(n+1) + diphosphate. In terms of biological role, DNA-dependent RNA polymerase catalyzes the transcription of DNA into RNA using the four ribonucleoside triphosphates as substrates. The polypeptide is DNA-directed RNA polymerase subunit beta (Pseudomonas putida (strain GB-1)).